Consider the following 193-residue polypeptide: NAD(P)H-quinone oxidoreductase subunit I (193 aa).

2 4Fe-4S ferredoxin-type domains span residues 55-84 (GRIH…VDWE) and 95-124 (KHYS…MTEE). [4Fe-4S] cluster-binding residues include Cys64, Cys67, Cys70, Cys74, Cys104, Cys107, Cys110, and Cys114. The disordered stretch occupies residues 169–193 (LDPHDLPSGNQRSGKRPEEIIAESD).

It belongs to the complex I 23 kDa subunit family. NDH-1 is composed of at least 11 different subunits. Requires [4Fe-4S] cluster as cofactor.

Its subcellular location is the cellular thylakoid membrane. The catalysed reaction is a plastoquinone + NADH + (n+1) H(+)(in) = a plastoquinol + NAD(+) + n H(+)(out). It carries out the reaction a plastoquinone + NADPH + (n+1) H(+)(in) = a plastoquinol + NADP(+) + n H(+)(out). Its function is as follows. NDH-1 shuttles electrons from an unknown electron donor, via FMN and iron-sulfur (Fe-S) centers, to quinones in the respiratory and/or the photosynthetic chain. The immediate electron acceptor for the enzyme in this species is believed to be plastoquinone. Couples the redox reaction to proton translocation, and thus conserves the redox energy in a proton gradient. This is NAD(P)H-quinone oxidoreductase subunit I from Rippkaea orientalis (strain PCC 8801 / RF-1) (Cyanothece sp. (strain PCC 8801)).